The primary structure comprises 351 residues: Nicotinate-nucleotide--dimethylbenzimidazole phosphoribosyltransferase (351 aa).

The Proton acceptor role is filled by Glu317.

The protein belongs to the CobT family.

It catalyses the reaction 5,6-dimethylbenzimidazole + nicotinate beta-D-ribonucleotide = alpha-ribazole 5'-phosphate + nicotinate + H(+). It functions in the pathway nucleoside biosynthesis; alpha-ribazole biosynthesis; alpha-ribazole from 5,6-dimethylbenzimidazole: step 1/2. Catalyzes the synthesis of alpha-ribazole-5'-phosphate from nicotinate mononucleotide (NAMN) and 5,6-dimethylbenzimidazole (DMB). The protein is Nicotinate-nucleotide--dimethylbenzimidazole phosphoribosyltransferase of Pseudomonas putida (strain ATCC 700007 / DSM 6899 / JCM 31910 / BCRC 17059 / LMG 24140 / F1).